Reading from the N-terminus, the 298-residue chain is TLR adapter interacting with SLC15A4 on the lysosome (298 aa).

Positions 287 to 291 (SLHIS) match the pLxIS motif motif. Residue Ser291 is modified to Phosphoserine.

Interacts (via pLxIS motif) with IRF5; leading to IRF5 activation. Interacts with SLC15A4; leading to its recruitment to endolysosome. Post-translationally, the phosphorylated pLxIS motif constitutes an IRF5-binding motif, leading to recruitment of the transcription factor IRF5 to induce type-I interferons and other cytokines.

It is found in the lysosome membrane. The protein resides in the endosome membrane. The protein localises to the nucleus. Its subcellular location is the cytoplasm. Its function is as follows. Innate immune adapter that mediates the recruitment and activation of IRF5 downstream of endolysosomal toll-like receptors TLR7, TLR8 and TLR9. Following recruitment to endolysosome by SLC15A4 downstream of TLR7, TLR8 and TLR9, specifically recruits IRF5 transcription factor via its pLxIS motif, leading to IRF5 activation and subsequent expression of type I interferons. Plays a role in the regulation of endolysosomal pH in immune cells such as B-cells, dendritic cells and monocytes. The protein is TLR adapter interacting with SLC15A4 on the lysosome of Mus musculus (Mouse).